A 225-amino-acid chain; its full sequence is Ribosomal RNA small subunit methyltransferase G (225 aa).

S-adenosyl-L-methionine-binding positions include G62, A113 to E114, and K130.

It belongs to the methyltransferase superfamily. RNA methyltransferase RsmG family.

It is found in the cytoplasm. In terms of biological role, specifically methylates the N7 position of a guanine in 16S rRNA. The polypeptide is Ribosomal RNA small subunit methyltransferase G (Petrotoga mobilis (strain DSM 10674 / SJ95)).